The following is a 296-amino-acid chain: ATP synthase gamma chain (296 aa).

It belongs to the ATPase gamma chain family. As to quaternary structure, F-type ATPases have 2 components, CF(1) - the catalytic core - and CF(0) - the membrane proton channel. CF(1) has five subunits: alpha(3), beta(3), gamma(1), delta(1), epsilon(1). CF(0) has three main subunits: a, b and c.

The protein resides in the cell inner membrane. Produces ATP from ADP in the presence of a proton gradient across the membrane. The gamma chain is believed to be important in regulating ATPase activity and the flow of protons through the CF(0) complex. In Rhodopirellula baltica (strain DSM 10527 / NCIMB 13988 / SH1), this protein is ATP synthase gamma chain.